A 92-amino-acid chain; its full sequence is Small ribosomal subunit protein uS19c (92 aa).

Belongs to the universal ribosomal protein uS19 family.

It localises to the plastid. The protein resides in the chloroplast. In terms of biological role, protein S19 forms a complex with S13 that binds strongly to the 16S ribosomal RNA. The protein is Small ribosomal subunit protein uS19c of Nicotiana sylvestris (Wood tobacco).